The chain runs to 155 residues: Large ribosomal subunit protein eL24 (155 aa).

Residues 94–129 (RSLKPEVRKAQRDEKKKADKEKKKADKAARKSEKAK) show a composition bias toward basic and acidic residues. The interval 94 to 155 (RSLKPEVRKA…AFQKVAATSR (62 aa)) is disordered.

It belongs to the eukaryotic ribosomal protein eL24 family.

The protein is Large ribosomal subunit protein eL24 (RPL24) of Kluyveromyces lactis (strain ATCC 8585 / CBS 2359 / DSM 70799 / NBRC 1267 / NRRL Y-1140 / WM37) (Yeast).